The primary structure comprises 165 residues: UPF0262 protein blr1257 (165 aa).

Belongs to the UPF0262 family.

This chain is UPF0262 protein blr1257, found in Bradyrhizobium diazoefficiens (strain JCM 10833 / BCRC 13528 / IAM 13628 / NBRC 14792 / USDA 110).